The sequence spans 497 residues: uncharacterized protein (497 aa).

2 consecutive ABC transporter domains span residues 9–247 (VSVR…MGQA) and 256–496 (ARPA…TGMA). 41–48 (GGNGAGKS) lines the ATP pocket.

This sequence belongs to the ABC transporter superfamily. Ribose importer (TC 3.A.1.2.1) family.

It localises to the cell membrane. Functionally, probably part of the binding-protein-dependent transport system y4mIJK. This system probably transports a sugar. Probably responsible for energy coupling to the transport system. This is an uncharacterized protein from Sinorhizobium fredii (strain NBRC 101917 / NGR234).